Here is a 69-residue protein sequence, read N- to C-terminus: Small cysteine-rich protein (69 aa).

Residues 1–19 (MKLQLCLVLLLLGVLYVQS) form the signal peptide. Residues 20 to 22 (VPE) constitute a propeptide that is removed on maturation.

It belongs to the Cnidaria small cysteine-rich protein (SCRiP) family. delta subfamily. In terms of processing, contains 4 disulfide bonds.

Its subcellular location is the secreted. It localises to the nematocyst. Its function is as follows. Induces neurotoxic symptoms on zebrafish. Has also been claimed to be implied in calcification, but this function seems improbable. The sequence is that of Small cysteine-rich protein from Metridium senile (Brown sea anemone).